We begin with the raw amino-acid sequence, 140 residues long: Nucleoside diphosphate kinase (140 aa).

ATP-binding residues include Lys11, Phe59, Arg87, Thr93, Arg104, and Asn114. His117 serves as the catalytic Pros-phosphohistidine intermediate.

Belongs to the NDK family. Homotetramer. Requires Mg(2+) as cofactor.

The protein resides in the cytoplasm. It carries out the reaction a 2'-deoxyribonucleoside 5'-diphosphate + ATP = a 2'-deoxyribonucleoside 5'-triphosphate + ADP. The catalysed reaction is a ribonucleoside 5'-diphosphate + ATP = a ribonucleoside 5'-triphosphate + ADP. Its function is as follows. Major role in the synthesis of nucleoside triphosphates other than ATP. The ATP gamma phosphate is transferred to the NDP beta phosphate via a ping-pong mechanism, using a phosphorylated active-site intermediate. In Rhizorhabdus wittichii (strain DSM 6014 / CCUG 31198 / JCM 15750 / NBRC 105917 / EY 4224 / RW1) (Sphingomonas wittichii), this protein is Nucleoside diphosphate kinase.